We begin with the raw amino-acid sequence, 600 residues long: Xylulose kinase (600 aa).

Position 79 to 82 (79 to 82 (WLEA)) interacts with substrate. The residue at position 244 (Ser-244) is a Phosphoserine. Asp-299 lines the substrate pocket. Residues Gly-358 and 505-509 (GASKN) each bind ATP.

Belongs to the FGGY kinase family.

It is found in the cytoplasm. The enzyme catalyses D-xylulose + ATP = D-xylulose 5-phosphate + ADP + H(+). Its function is as follows. Xylulose kinase necessary for growth in culture media with D-xylulose as the solecarbon source. In Saccharomyces cerevisiae (strain ATCC 204508 / S288c) (Baker's yeast), this protein is Xylulose kinase.